We begin with the raw amino-acid sequence, 519 residues long: Membrane-bound transcription factor site-2 protease (519 aa).

Residues 1-3 lie on the Cytoplasmic side of the membrane; it reads MIP. Residues 4 to 24 traverse the membrane as a helical segment; that stretch reads VSLVVVVVGGWTVVYLTDLVL. Topologically, residues 25 to 74 are lumenal; sequence KSSVYFKHSYEDWLENNGLSISPFHIRWQTAVFNRAFYSWGRRKARMLYQ. A run of 2 helical transmembrane segments spans residues 75 to 95 and 96 to 107; these read WFNFGMVFGVIAMFSSFFLLG and KTLMQTLAQMMA. Residues 108-144 are Lumenal-facing; sequence DSPSSYSSSSSSSSSSSSSSSSSSSSSSSLHNEQVLQ. Residues 115-135 are disordered; it reads SSSSSSSSSSSSSSSSSSSSS. A helical transmembrane segment spans residues 145–169; the sequence is VVVPGINLPVNQLTYFFTAVLISGV. Zn(2+) is bound at residue H171. E172 is a catalytic residue. 3 helical membrane passes run 174–186, 187–209, and 229–251; these read GHGIAAIREQVRF, NGFGIFLFIIYPGAFVDLFTTHL, and FVLALLGILALVLLPVILLPFYY. H175 is a binding site for Zn(2+). Over 252–446 the chain is Lumenal; the sequence is TGVGVLITEV…LPVVVETFVK (195 aa). N337 carries N-linked (GlcNAc...) asparagine glycosylation. A run of 2 helical transmembrane segments spans residues 447 to 464 and 465 to 476; these read YLISLSGALAIVNAVPCF and ALDGQWILNSFL. Residues 477–492 are Lumenal-facing; sequence DATLTSVIGDNDVKDL. A helical transmembrane segment spans residues 493 to 513; the sequence is IGFFILLGGSVLLAANVTLGL. Residues 514 to 519 lie on the Cytoplasmic side of the membrane; that stretch reads WMVTAR.

The protein belongs to the peptidase M50A family. Requires Zn(2+) as cofactor. As to expression, expressed in heart, brain, placenta, lung, liver, muscle, kidney and pancreas.

It is found in the membrane. The protein resides in the cytoplasm. Its subcellular location is the golgi apparatus membrane. It carries out the reaction Cleaves several transcription factors that are type-2 transmembrane proteins within membrane-spanning domains. Known substrates include sterol regulatory element-binding protein (SREBP) -1, SREBP-2 and forms of the transcriptional activator ATF6. SREBP-2 is cleaved at the site 477-DRSRILL-|-CVLTFLCLSFNPLTSLLQWGGA-505. The residues Asn-Pro, 11 residues distal to the site of cleavage in the membrane-spanning domain, are important for cleavage by S2P endopeptidase. Replacement of either of these residues does not prevent cleavage, but there is no cleavage if both of these residues are replaced.. In terms of biological role, zinc metalloprotease that mediates intramembrane proteolysis of proteins such as ATF6, ATF6B, SREBF1/SREBP1 and SREBF2/SREBP2. Catalyzes the second step in the proteolytic activation of the sterol regulatory element-binding proteins (SREBPs) SREBF1/SREBP1 and SREBF2/SREBP2: cleaves SREBPs within the first transmembrane segment, thereby releasing the N-terminal segment with a portion of the transmembrane segment attached. Mature N-terminal SREBP fragments shuttle to the nucleus and activate gene transcription. Also mediates the second step in the proteolytic activation of the cyclic AMP-dependent transcription factor ATF-6 (ATF6 and ATF6B). Involved in intramembrane proteolysis during bone formation. In astrocytes and osteoblasts, upon DNA damage and ER stress, mediates the second step of the regulated intramembrane proteolytic activation of the transcription factor CREB3L1, leading to the inhibition of cell-cycle progression. This chain is Membrane-bound transcription factor site-2 protease, found in Homo sapiens (Human).